We begin with the raw amino-acid sequence, 187 residues long: Interferon alpha-1/2 (187 aa).

A signal peptide spans 1 to 23 (MALPCSFSVALVLLSCHSLCCLA). 2 disulfides stabilise this stretch: Cys-24–Cys-122 and Cys-52–Cys-160. An N-linked (GlcNAc...) asparagine glycan is attached at Asn-101.

This sequence belongs to the alpha/beta interferon family.

The protein localises to the secreted. Functionally, produced by macrophages, IFN-alpha have antiviral activities. Interferon stimulates the production of two enzymes: a protein kinase and an oligoadenylate synthetase. This chain is Interferon alpha-1/2, found in Canis lupus familiaris (Dog).